A 793-amino-acid polypeptide reads, in one-letter code: Protein smoothened (793 aa).

The signal sequence occupies residues Met-1 to Gly-30. Residues Arg-31–Tyr-237 lie on the Extracellular side of the membrane. The tract at residues Leu-35 to Pro-61 is disordered. An N-linked (GlcNAc...) asparagine glycan is attached at Asn-38. 5 disulfide bridges follow: Cys-68–Cys-182, Cys-74–Cys-138, Cys-82–Cys-131, Cys-122–Cys-158, and Cys-151–Cys-173. The region spanning Gly-69–Glu-185 is the FZ domain. A cholesterol-binding site is contributed by Asp-99. The N-linked (GlcNAc...) asparagine glycan is linked to Asn-192. 3 cysteine pairs are disulfide-bonded: Cys-197-Cys-217, Cys-221-Cys-299, and Cys-318-Cys-394. A helical transmembrane segment spans residues Ile-238–Ala-258. Residues Asp-259–Tyr-266 are Cytoplasmic-facing. Residues Pro-267–Ala-287 form a helical membrane-spanning segment. Residues Gln-288 to Cys-318 lie on the Extracellular side of the membrane. Residues Val-319–Leu-339 form a helical membrane-spanning segment. At Thr-340–Ser-362 the chain is on the cytoplasmic side. The chain crosses the membrane as a helical span at residues Tyr-363–Ala-383. Residues Gln-384–Gly-406 lie on the Extracellular side of the membrane. Tyr-398 contributes to the cholesterol binding site. A helical transmembrane segment spans residues Phe-407–Val-427. Over Met-428–Arg-455 the chain is Cytoplasmic. Residues Leu-456–Tyr-476 form a helical membrane-spanning segment. The Extracellular portion of the chain corresponds to Asp-477–Ala-528. An intrachain disulfide couples Cys-494 to Cys-511. N-linked (GlcNAc...) asparagine glycosylation occurs at Asn-497. Residues Met-529 to Trp-549 traverse the membrane as a helical segment. Positions Thr-542–Ile-573 are interaction with BBS5 and BBS7. At Arg-550–Phe-793 the chain is on the cytoplasmic side. A phosphoserine mark is found at Ser-560, Ser-578, and Ser-594. Residues Ala-574–Asn-657 form a required for interaction with PRKACA region. Positions Gln-585–Thr-597 are interaction with DLG5. At Thr-597 the chain carries Phosphothreonine. 2 positions are modified to phosphoserine: Ser-599 and Ser-642. Phosphothreonine is present on residues Thr-644 and Thr-648. At Ser-666 the chain carries Phosphoserine. Over residues Gly-674–Lys-684 the composition is skewed to basic residues. Positions Gly-674–Pro-702 are disordered.

The protein belongs to the G-protein coupled receptor Fz/Smo family. As to quaternary structure, homodimer. Interacts (via C-terminus) with protein kinase A catalytic subunit PRKACA; interacts with free PRKACA subunits and the interaction leads to sequestration of PRKACA at the membrane, preventing PRKACA-mediated phosphorylation of GLI transcription factors. Interacts with ARRB2. Interacts with KIF7. Interacts with BBS5 and BBS7; the interactions are indicative for the association of SMO with the BBsome complex to facilitate ciliary localization of SMO. Interacts with DLG5 and SDCBP. Interacts with GAS8/DRC4. Post-translationally, phosphorylation by GRK kinases is required for interaction with protein kinase A catalytic subunit PRKACA. In terms of tissue distribution, in embryo, found in the early neural folds and neural tube, pre-somitic mesoderm and somites, developing limb bud, gut, eye, testes, cartilage, muscle, lung, epiglottis, thymus, tongue, jaw, taste buds, teeth, and skin. In adult, found in multiple tissues including heart, brain, liver, lung, skeletal muscle, kidney and testis.

The protein localises to the cell membrane. Its subcellular location is the cell projection. It localises to the cilium. Functionally, g protein-coupled receptor which associates with the patched protein (PTCH) to transduce hedgehog protein signaling. Binding of sonic hedgehog (SHH) to its receptor patched prevents inhibition of smoothened (SMO) by patched. When active, SMO binds to and sequesters protein kinase A catalytic subunit PRKACA at the cell membrane, preventing PRKACA-mediated phosphorylation of GLI transcription factors which releases the GLI proteins from PRKACA-mediated inhibition and allows for transcriptional activation of hedgehog pathway target genes. Required for the accumulation of KIF7, GLI2 and GLI3 in the cilia. Interacts with DLG5 at the ciliary base to induce the accumulation of KIF7 and GLI2 at the ciliary tip for GLI2 activation. The chain is Protein smoothened (Smo) from Rattus norvegicus (Rat).